We begin with the raw amino-acid sequence, 346 residues long: NADH-ubiquinone oxidoreductase chain 2 (346 aa).

A run of 11 helical transmembrane segments spans residues 1-21 (MSPYISPLFSITMIMSVMLIS), 26-46 (WVFMWLGLELGTLAFIPILVW), 60-80 (FIVQAMAAAVFFLGGMVSLSG), 96-116 (MMIMLAVVTKLGLAPFHYWVV), 122-142 (LNYIPGAVLLTWQKVPGLAVL), 151-171 (SSMLLLFGMVSALVGGLGGLG), 178-198 (LLAFSSISHLGWLVVGCVAGS), 199-219 (LLGLSYFTLYVVLSIPLFSIL), 242-262 (VLLGVGFLSLGGLPPFFGFFG), 274-294 (LLLGVSVVLITGTLISLFYYL), and 320-340 (LSGLMSGLLVLNMLGLFLVGG).

The protein belongs to the complex I subunit 2 family.

It is found in the mitochondrion inner membrane. The enzyme catalyses a ubiquinone + NADH + 5 H(+)(in) = a ubiquinol + NAD(+) + 4 H(+)(out). Core subunit of the mitochondrial membrane respiratory chain NADH dehydrogenase (Complex I) that is believed to belong to the minimal assembly required for catalysis. Complex I functions in the transfer of electrons from NADH to the respiratory chain. The immediate electron acceptor for the enzyme is believed to be ubiquinone. This chain is NADH-ubiquinone oxidoreductase chain 2 (ND2), found in Branchiostoma floridae (Florida lancelet).